The primary structure comprises 496 residues: Glycerol kinase (496 aa).

Threonine 12 serves as a coordination point for ADP. Positions 12, 13, and 14 each coordinate ATP. Residue threonine 12 participates in sn-glycerol 3-phosphate binding. Arginine 16 provides a ligand contact to ADP. Sn-glycerol 3-phosphate-binding residues include arginine 82, glutamate 83, tyrosine 134, and aspartate 244. Glycerol-binding residues include arginine 82, glutamate 83, tyrosine 134, aspartate 244, and glutamine 245. Residues threonine 266 and glycine 309 each coordinate ADP. 4 residues coordinate ATP: threonine 266, glycine 309, glutamine 313, and glycine 410. ADP contacts are provided by glycine 410 and asparagine 414.

Belongs to the FGGY kinase family.

The catalysed reaction is glycerol + ATP = sn-glycerol 3-phosphate + ADP + H(+). It functions in the pathway polyol metabolism; glycerol degradation via glycerol kinase pathway; sn-glycerol 3-phosphate from glycerol: step 1/1. Inhibited by fructose 1,6-bisphosphate (FBP). In terms of biological role, key enzyme in the regulation of glycerol uptake and metabolism. Catalyzes the phosphorylation of glycerol to yield sn-glycerol 3-phosphate. The polypeptide is Glycerol kinase (Treponema denticola (strain ATCC 35405 / DSM 14222 / CIP 103919 / JCM 8153 / KCTC 15104)).